The primary structure comprises 693 residues: tRNA (guanine(27)-N(2))-dimethyltransferase (693 aa).

Positions 95–99 (HKLRR) match the Nucleolar localization signal motif. The C2H2-type zinc finger occupies 144-166 (YHCIICSATITRRTDMLGHVRRH). The Trm1 methyltransferase domain occupies 187-648 (EILKEADTDV…APLMQFKSIL (462 aa)). S-adenosyl-L-methionine is bound by residues Arg-220, Asp-267, Asp-317, and Ala-318. Residues Cys-448, Cys-451, Cys-473, and Cys-475 each coordinate Zn(2+). Residue Lys-545 forms a Glycyl lysine isopeptide (Lys-Gly) (interchain with G-Cter in SUMO2) linkage. Phosphoserine occurs at positions 572 and 667.

Belongs to the class I-like SAM-binding methyltransferase superfamily. Trm1 family.

Its subcellular location is the nucleus. It localises to the nucleolus. The enzyme catalyses guanosine(27) in tRNA(Tyr) + 2 S-adenosyl-L-methionine = N(2)-dimethylguanosine(27) in tRNA(Tyr) + 2 S-adenosyl-L-homocysteine + 2 H(+). Specifically dimethylates a single guanine residue at position 27 of tRNA(Tyr) using S-adenosyl-L-methionine as donor of the methyl groups. Dimethylation at position 27 of tRNA(Tyr) is required for efficient translation of tyrosine codons. Also required to maintain 3-(3-amino-3-carboxypropyl)uridine (acp3U) in the D-loop of several cytoplasmic tRNAs. This Macaca fascicularis (Crab-eating macaque) protein is tRNA (guanine(27)-N(2))-dimethyltransferase (TRMT1L).